The sequence spans 248 residues: Killer cell lectin-like receptor subfamily I member 2 (248 aa).

Over 1–79 (MHKKKHIKHG…GIDPWLTTWQ (79 aa)) the chain is Cytoplasmic. Residues 19–44 (IGTKSPTFQEKQRPSKTDQRSTVWRE) form a disordered region. The span at 28-44 (EKQRPSKTDQRSTVWRE) shows a compositional bias: basic and acidic residues. The chain crosses the membrane as a helical; Signal-anchor for type II membrane protein span at residues 80–100 (MITVILATLCIILVTKVGFLI). Residues 101 to 248 (PSLFSKGEKQ…KKTYICEFNI (148 aa)) are Extracellular-facing. 3 cysteine pairs are disulfide-bonded: Cys-132/Cys-145, Cys-161/Cys-244, and Cys-223/Cys-236. Residues 139 to 245 (FGNNFYCVFR…CSAKKTYICE (107 aa)) form the C-type lectin domain. N-linked (GlcNAc...) asparagine glycans are attached at residues Asn-197, Asn-214, and Asn-220.

As to quaternary structure, heterodimer with KLRE1. Expressed in natural killer (NK) cells.

It is found in the cell membrane. Lectin-like receptor for natural killer (NK) cells. Heterodimer formation with KLRE1 mediates NK cell cytolytic activity. In Mus musculus (Mouse), this protein is Killer cell lectin-like receptor subfamily I member 2.